Reading from the N-terminus, the 140-residue chain is Profilin (140 aa).

S2 bears the N-acetylserine mark.

The protein belongs to the profilin family. In terms of assembly, occurs in many kinds of cells as a complex with monomeric actin in a 1:1 ratio.

The protein resides in the cytoplasm. The protein localises to the cytoskeleton. Its function is as follows. Binds to actin and affects the structure of the cytoskeleton. At high concentrations, profilin prevents the polymerization of actin, whereas it enhances it at low concentrations. By binding to PIP2, it inhibits the formation of IP3 and DG. This is Profilin from Heliocidaris crassispina (Sea urchin).